The following is a 309-amino-acid chain: Tagatose-6-phosphate kinase (309 aa).

Belongs to the carbohydrate kinase PfkB family. LacC subfamily.

It carries out the reaction D-tagatofuranose 6-phosphate + ATP = D-tagatofuranose 1,6-bisphosphate + ADP + H(+). It participates in carbohydrate metabolism; D-tagatose 6-phosphate degradation; D-glyceraldehyde 3-phosphate and glycerone phosphate from D-tagatose 6-phosphate: step 1/2. In Streptococcus pyogenes serotype M2 (strain MGAS10270), this protein is Tagatose-6-phosphate kinase.